A 485-amino-acid polypeptide reads, in one-letter code: E3 ubiquitin-protein ligase TRIM68 (485 aa).

The segment at 16–61 (CPICMTFLREPVSISCGHTFCHSCLSGLWKLPGESQNLSYTCPLCR) adopts an RING-type zinc-finger fold. The B box-type zinc-finger motif lies at 93 to 134 (LKTDVCDLHKEQLTMFCKEDDMVTCEACKQSPEHEAHSVVPI). Zn(2+)-binding residues include Cys98, His101, Cys120, and His126. Residues 144 to 226 (KLQQALEHLR…EQEKGETASK (83 aa)) adopt a coiled-coil conformation. The B30.2/SPRY domain occupies 285–483 (LKTDCRVLGL…TPLTICTLGG (199 aa)).

This sequence belongs to the TRIM/RBCC family. Interacts with AR/androgen receptor (via ligand-binding domain). Interacts with KAT5/TIP60. In terms of processing, auto-ubiquitinated.

The protein resides in the cytoplasm. It localises to the perinuclear region. Its subcellular location is the nucleus. It catalyses the reaction S-ubiquitinyl-[E2 ubiquitin-conjugating enzyme]-L-cysteine + [acceptor protein]-L-lysine = [E2 ubiquitin-conjugating enzyme]-L-cysteine + N(6)-ubiquitinyl-[acceptor protein]-L-lysine.. The protein operates within protein modification; protein ubiquitination. Functions as a ubiquitin E3 ligase. Acts as a coactivator of androgen receptor (AR) depending on its ubiquitin ligase activity. In Mus musculus (Mouse), this protein is E3 ubiquitin-protein ligase TRIM68 (Trim68).